The following is a 308-amino-acid chain: Oxygen-dependent coproporphyrinogen-III oxidase (308 aa).

Substrate is bound at residue S100. A divalent metal cation contacts are provided by H104 and H114. H114 acts as the Proton donor in catalysis. Residue 116–118 (NFR) participates in substrate binding. A divalent metal cation contacts are provided by H153 and H183. The tract at residues 248 to 283 (YVEFNLVFDRGTIFGLQSGGRTESILSSMPPMATWK) is important for dimerization. 266–268 (GGR) is a binding site for substrate.

It belongs to the aerobic coproporphyrinogen-III oxidase family. In terms of assembly, homodimer. A divalent metal cation is required as a cofactor.

The protein resides in the cytoplasm. The enzyme catalyses coproporphyrinogen III + O2 + 2 H(+) = protoporphyrinogen IX + 2 CO2 + 2 H2O. It participates in porphyrin-containing compound metabolism; protoporphyrin-IX biosynthesis; protoporphyrinogen-IX from coproporphyrinogen-III (O2 route): step 1/1. Functionally, involved in the heme biosynthesis. Catalyzes the aerobic oxidative decarboxylation of propionate groups of rings A and B of coproporphyrinogen-III to yield the vinyl groups in protoporphyrinogen-IX. The protein is Oxygen-dependent coproporphyrinogen-III oxidase of Francisella philomiragia subsp. philomiragia (strain ATCC 25017 / CCUG 19701 / FSC 153 / O#319-036).